The following is a 308-amino-acid chain: Homeobox protein abdominal-A homolog (308 aa).

The segment at residues 138-197 (RRRGRQTYTRFQTLELEKEFHFNHYLTRRRRIEIAHALCLTERQIKIWFQNRRMKLKKEL) is a DNA-binding region (homeobox). Residues 207–221 (ARREREEQDKMKNES) are compositionally biased toward basic and acidic residues. Positions 207–277 (ARREREEQDK…SGNLGSHLHH (71 aa)) are disordered. Residues 223–247 (KSAQQHHSQKQAQQEHTVVGSQQTS) are compositionally biased toward low complexity. Over residues 248 to 269 (NGGGTGGGTGGSGGAGSGGSSG) the composition is skewed to gly residues.

The protein belongs to the Antp homeobox family.

The protein localises to the nucleus. Functionally, sequence-specific transcription factor which is part of a developmental regulatory system that provides cells with specific positional identities on the anterior-posterior axis. This chain is Homeobox protein abdominal-A homolog, found in Anopheles gambiae (African malaria mosquito).